A 109-amino-acid polypeptide reads, in one-letter code: Tektin-3 (109 aa).

The protein belongs to the tektin family. Microtubule inner protein component of sperm flagellar doublet microtubules. Interacts with TEKT1, TEKT2, TEKT4 and TEKT5. Interacts with CCDC38. Post-translationally, N- and O-glycosylated. May be proteolytically processed during the epididymal transit of spermatozoa. In terms of processing, ubiquitinated, leading to its degradation. Deubiquitinated by USP16, promoting its stability.

It localises to the cytoplasm. The protein localises to the cytoskeleton. The protein resides in the cilium axoneme. It is found in the flagellum axoneme. Its subcellular location is the cytoplasmic vesicle. It localises to the secretory vesicle. The protein localises to the acrosome outer membrane. Functionally, microtubule inner protein (MIP) part of the dynein-decorated doublet microtubules (DMTs) in cilia and flagellar axoneme. Forms filamentous polymers in the walls of ciliary and flagellar microtubules. Required for normal sperm mobility. The polypeptide is Tektin-3 (Mesocricetus auratus (Golden hamster)).